Here is a 127-residue protein sequence, read N- to C-terminus: Small ribosomal subunit protein bS6 (127 aa).

The tract at residues 101 to 127 (PMMKEEKARDLLQGAKADAPAEQPAAA) is disordered. Positions 115 to 127 (AKADAPAEQPAAA) are enriched in low complexity.

The protein belongs to the bacterial ribosomal protein bS6 family.

Functionally, binds together with bS18 to 16S ribosomal RNA. The protein is Small ribosomal subunit protein bS6 of Thiobacillus denitrificans (strain ATCC 25259 / T1).